The sequence spans 432 residues: Glutamate--tRNA ligase 2 (432 aa).

Residues 6 to 16 carry the 'HIGH' region motif; it reads PSPTGDMHIGN. The 'KMSKS' region motif lies at 235–239; the sequence is KMSKR. Position 238 (Lys-238) interacts with ATP.

This sequence belongs to the class-I aminoacyl-tRNA synthetase family. Glutamate--tRNA ligase type 1 subfamily. In terms of assembly, monomer.

The protein resides in the cytoplasm. It carries out the reaction tRNA(Glu) + L-glutamate + ATP = L-glutamyl-tRNA(Glu) + AMP + diphosphate. Functionally, catalyzes the attachment of glutamate to tRNA(Glu) in a two-step reaction: glutamate is first activated by ATP to form Glu-AMP and then transferred to the acceptor end of tRNA(Glu). The sequence is that of Glutamate--tRNA ligase 2 from Sulfurimonas denitrificans (strain ATCC 33889 / DSM 1251) (Thiomicrospira denitrificans (strain ATCC 33889 / DSM 1251)).